Here is a 207-residue protein sequence, read N- to C-terminus: Thymidylate kinase (207 aa).

Position 7–14 (glycine 7–serine 14) interacts with ATP.

It belongs to the thymidylate kinase family.

The catalysed reaction is dTMP + ATP = dTDP + ADP. In terms of biological role, phosphorylation of dTMP to form dTDP in both de novo and salvage pathways of dTTP synthesis. The chain is Thymidylate kinase from Chlamydia felis (strain Fe/C-56) (Chlamydophila felis).